A 206-amino-acid chain; its full sequence is ATP-dependent Clp protease proteolytic subunit 1 (206 aa).

Ser103 serves as the catalytic Nucleophile. Residue His128 is part of the active site.

The protein belongs to the peptidase S14 family. In terms of assembly, fourteen ClpP subunits assemble into 2 heptameric rings which stack back to back to give a disk-like structure with a central cavity, resembling the structure of eukaryotic proteasomes.

It localises to the cytoplasm. It carries out the reaction Hydrolysis of proteins to small peptides in the presence of ATP and magnesium. alpha-casein is the usual test substrate. In the absence of ATP, only oligopeptides shorter than five residues are hydrolyzed (such as succinyl-Leu-Tyr-|-NHMec, and Leu-Tyr-Leu-|-Tyr-Trp, in which cleavage of the -Tyr-|-Leu- and -Tyr-|-Trp bonds also occurs).. Its function is as follows. Cleaves peptides in various proteins in a process that requires ATP hydrolysis. Has a chymotrypsin-like activity. Plays a major role in the degradation of misfolded proteins. This Protochlamydia amoebophila (strain UWE25) protein is ATP-dependent Clp protease proteolytic subunit 1.